Consider the following 441-residue polypeptide: Homoserine dehydrogenase (441 aa).

Residues Asn17 and Val18 each contribute to the NADP(+) site. NAD(+)-binding residues include Val18, Val37, and Gly47. Val18 serves as a coordination point for NADPH. Arg49, Arg50, and Lys107 together coordinate NADP(+). Arg49 serves as a coordination point for NADPH. Lys107 is an NADPH binding site. Positions 131, 134, 136, and 138 each coordinate Na(+). Residues Gly189 and Glu192 each contribute to the NADP(+) site. The L-homoserine site is built by Glu192 and Asp203. Lys207 functions as the Proton donor in the catalytic mechanism. Gly309 is an NADP(+) binding site. Residue Gly309 participates in NAD(+) binding. Residue Gly309 coordinates NADPH. An ACT domain is found at 356-435 (YVSMNVADKP…VVQGVSSVIR (80 aa)).

It belongs to the homoserine dehydrogenase family. Requires a metal cation as cofactor.

The catalysed reaction is L-homoserine + NADP(+) = L-aspartate 4-semialdehyde + NADPH + H(+). The enzyme catalyses L-homoserine + NAD(+) = L-aspartate 4-semialdehyde + NADH + H(+). It functions in the pathway amino-acid biosynthesis; L-methionine biosynthesis via de novo pathway; L-homoserine from L-aspartate: step 3/3. It participates in amino-acid biosynthesis; L-threonine biosynthesis; L-threonine from L-aspartate: step 3/5. Functionally, catalyzes the conversion of L-aspartate-beta-semialdehyde (L-Asa) to L-homoserine (L-Hse), the third step in the biosynthesis of threonine and methionine from aspartate. In Mycobacterium tuberculosis (strain CDC 1551 / Oshkosh), this protein is Homoserine dehydrogenase (hom).